A 300-amino-acid chain; its full sequence is Ribosomal RNA small subunit methyltransferase H (300 aa).

S-adenosyl-L-methionine-binding positions include 33–35 (AGH), aspartate 52, phenylalanine 86, aspartate 97, and glutamine 104.

This sequence belongs to the methyltransferase superfamily. RsmH family.

It localises to the cytoplasm. It catalyses the reaction cytidine(1402) in 16S rRNA + S-adenosyl-L-methionine = N(4)-methylcytidine(1402) in 16S rRNA + S-adenosyl-L-homocysteine + H(+). Its function is as follows. Specifically methylates the N4 position of cytidine in position 1402 (C1402) of 16S rRNA. The polypeptide is Ribosomal RNA small subunit methyltransferase H (Aliarcobacter butzleri (strain RM4018) (Arcobacter butzleri)).